A 229-amino-acid polypeptide reads, in one-letter code: Enolase-phosphatase E1 (229 aa).

Residues 206 to 229 (DRDPASHHPQVQRFDDIHPEQIPA) form a disordered region. Over residues 218–229 (RFDDIHPEQIPA) the composition is skewed to basic and acidic residues.

It belongs to the HAD-like hydrolase superfamily. MasA/MtnC family. Monomer. Mg(2+) serves as cofactor.

The catalysed reaction is 5-methylsulfanyl-2,3-dioxopentyl phosphate + H2O = 1,2-dihydroxy-5-(methylsulfanyl)pent-1-en-3-one + phosphate. It functions in the pathway amino-acid biosynthesis; L-methionine biosynthesis via salvage pathway; L-methionine from S-methyl-5-thio-alpha-D-ribose 1-phosphate: step 3/6. It participates in amino-acid biosynthesis; L-methionine biosynthesis via salvage pathway; L-methionine from S-methyl-5-thio-alpha-D-ribose 1-phosphate: step 4/6. In terms of biological role, bifunctional enzyme that catalyzes the enolization of 2,3-diketo-5-methylthiopentyl-1-phosphate (DK-MTP-1-P) into the intermediate 2-hydroxy-3-keto-5-methylthiopentenyl-1-phosphate (HK-MTPenyl-1-P), which is then dephosphorylated to form the acireductone 1,2-dihydroxy-3-keto-5-methylthiopentene (DHK-MTPene). The protein is Enolase-phosphatase E1 of Klebsiella oxytoca.